Reading from the N-terminus, the 311-residue chain is Bifunctional protein FolD (311 aa).

Residue 174–176 (GKG) participates in NADP(+) binding.

This sequence belongs to the tetrahydrofolate dehydrogenase/cyclohydrolase family. In terms of assembly, homodimer.

The enzyme catalyses (6R)-5,10-methylene-5,6,7,8-tetrahydrofolate + NADP(+) = (6R)-5,10-methenyltetrahydrofolate + NADPH. The catalysed reaction is (6R)-5,10-methenyltetrahydrofolate + H2O = (6R)-10-formyltetrahydrofolate + H(+). It functions in the pathway one-carbon metabolism; tetrahydrofolate interconversion. Functionally, catalyzes the oxidation of 5,10-methylenetetrahydrofolate to 5,10-methenyltetrahydrofolate and then the hydrolysis of 5,10-methenyltetrahydrofolate to 10-formyltetrahydrofolate. The sequence is that of Bifunctional protein FolD from Pyrobaculum aerophilum (strain ATCC 51768 / DSM 7523 / JCM 9630 / CIP 104966 / NBRC 100827 / IM2).